The chain runs to 317 residues: Apolipoprotein E (317 aa).

The signal sequence occupies residues 1–18 (MKVLWAALLVTFLAGCQA). 8 consecutive repeat copies span residues 80 to 101 (ALMD…EQLT), 102 to 123 (PVAE…ARLG), 124 to 145 (ADME…AMLG), 146 to 167 (QSTE…KRLL), 168 to 189 (RDAD…EGAE), 190 to 211 (RGVS…VRAA), 212 to 233 (TVGS…ERLR), and 234 to 255 (ARME…EQVA). Positions 80–255 (ALMDETMKEL…RLDEVKEQVA (176 aa)) are 8 X 22 AA approximate tandem repeats. Met143 carries the methionine sulfoxide modification. Ser147 bears the Phosphoserine mark. The interval 158–168 (HLRKLRKRLLR) is LDL and other lipoprotein receptors binding. 162–165 (LRKR) serves as a coordination point for heparin. The interval 210–290 (AATVGSLAGQ…SWFEPLVEDM (81 aa)) is lipid-binding and lipoprotein association. 229 to 236 (GERLRARM) serves as a coordination point for heparin. The tract at residues 266-317 (QQIRLQAEAFQARLKSWFEPLVEDMQRQWAGLVEKVQAAMGTSAAPVPSDNH) is homooligomerization. A specificity for association with VLDL region spans residues 278–290 (RLKSWFEPLVEDM).

It belongs to the apolipoprotein A1/A4/E family. In terms of assembly, homotetramer. May interact with ABCA1; functionally associated with ABCA1 in the biogenesis of HDLs. May interact with APP/A4 amyloid-beta peptide; the interaction is extremely stable in vitro but its physiological significance is unclear. May interact with MAPT. May interact with MAP2. In the cerebrospinal fluid, interacts with secreted SORL1. Interacts with PMEL; this allows the loading of PMEL luminal fragment on ILVs to induce fibril nucleation. Post-translationally, APOE exists as multiple glycosylated and sialylated glycoforms within cells and in plasma. The extent of glycosylation and sialylation are tissue and context specific. In terms of processing, glycated in plasma VLDL. Phosphorylated by FAM20C in the extracellular medium.

Its subcellular location is the secreted. The protein resides in the extracellular space. It is found in the extracellular matrix. The protein localises to the extracellular vesicle. It localises to the endosome. Its subcellular location is the multivesicular body. Its function is as follows. APOE is an apolipoprotein, a protein associating with lipid particles, that mainly functions in lipoprotein-mediated lipid transport between organs via the plasma and interstitial fluids. APOE is a core component of plasma lipoproteins and is involved in their production, conversion and clearance. Apolipoproteins are amphipathic molecules that interact both with lipids of the lipoprotein particle core and the aqueous environment of the plasma. As such, APOE associates with chylomicrons, chylomicron remnants, very low density lipoproteins (VLDL) and intermediate density lipoproteins (IDL) but shows a preferential binding to high-density lipoproteins (HDL). It also binds a wide range of cellular receptors including the LDL receptor/LDLR, the LDL receptor-related proteins LRP1, LRP2 and LRP8 and the very low-density lipoprotein receptor/VLDLR that mediate the cellular uptake of the APOE-containing lipoprotein particles. Finally, APOE also has a heparin-binding activity and binds heparan-sulfate proteoglycans on the surface of cells, a property that supports the capture and the receptor-mediated uptake of APOE-containing lipoproteins by cells. A main function of APOE is to mediate lipoprotein clearance through the uptake of chylomicrons, VLDLs, and HDLs by hepatocytes. APOE is also involved in the biosynthesis by the liver of VLDLs as well as their uptake by peripheral tissues ensuring the delivery of triglycerides and energy storage in muscle, heart and adipose tissues. By participating in the lipoprotein-mediated distribution of lipids among tissues, APOE plays a critical role in plasma and tissues lipid homeostasis. APOE is also involved in two steps of reverse cholesterol transport, the HDLs-mediated transport of cholesterol from peripheral tissues to the liver, and thereby plays an important role in cholesterol homeostasis. First, it is functionally associated with ABCA1 in the biogenesis of HDLs in tissues. Second, it is enriched in circulating HDLs and mediates their uptake by hepatocytes. APOE also plays an important role in lipid transport in the central nervous system, regulating neuron survival and sprouting. In Gorilla gorilla gorilla (Western lowland gorilla), this protein is Apolipoprotein E (APOE).